A 335-amino-acid polypeptide reads, in one-letter code: Probable pectinesterase 29 (335 aa).

Positions 1-24 are cleaved as a signal peptide; sequence MGTHRIFIGLIALCCFCLPHLIEA. N43 is a glycosylation site (N-linked (GlcNAc...) asparagine). The active-site Proton donor is the D166. Residue D187 is the Nucleophile of the active site. Substrate contacts are provided by R248 and W250. A glycan (N-linked (GlcNAc...) asparagine) is linked at N262.

It belongs to the pectinesterase family. As to expression, expressed in flower buds.

The protein localises to the secreted. It localises to the cell wall. It carries out the reaction [(1-&gt;4)-alpha-D-galacturonosyl methyl ester](n) + n H2O = [(1-&gt;4)-alpha-D-galacturonosyl](n) + n methanol + n H(+). It participates in glycan metabolism; pectin degradation; 2-dehydro-3-deoxy-D-gluconate from pectin: step 1/5. Acts in the modification of cell walls via demethylesterification of cell wall pectin. This chain is Probable pectinesterase 29 (PME29), found in Arabidopsis thaliana (Mouse-ear cress).